A 521-amino-acid polypeptide reads, in one-letter code: Maturase K (521 aa).

It belongs to the intron maturase 2 family. MatK subfamily.

It localises to the plastid. It is found in the chloroplast. Functionally, usually encoded in the trnK tRNA gene intron. Probably assists in splicing its own and other chloroplast group II introns. This Kniphofia uvaria (Red-hot poker) protein is Maturase K.